The sequence spans 610 residues: Myoneurin (610 aa).

In terms of domain architecture, BTB spans 24–89; that stretch reads CDCTVVIGEF…IYTGTLNLDS (66 aa). Residues 156–199 are disordered; it reads SEVSTDSVQANPKPRALTKKSSQSKKKKKAFSSQKPGQSKAVQY. The segment covering 171-185 has biased composition (basic residues); the sequence is ALTKKSSQSKKKKKA. Short sequence motifs (nuclear localization signal) lie at residues 174-190 and 257-262; these read KKSSQSKKKKKAFSSQK and KRKRRK. C2H2-type zinc fingers lie at residues 302–324, 330–352, 358–381, 387–409, 415–437, 443–465, 471–493, and 499–522; these read PMCNTCGKVFSEASSLRRHMRIH, YVCHLCGKAFTQCNQLKTHVRTH, YKCELCDKGFAQKCQLVFHSRMHH, YKCDVCNLQFATSSNLKIHARKH, YVCDRCGQRFAQASTLTYHVRRH, YVCDTCGKAFAVSSSLITHSRKH, YICGICGKSFISSGELNKHFRSH, and FICELCGNSYTDIKNLKKHKTKVH. A disordered region spans residues 519-548; the sequence is TKVHSGTDKNPDCSVDDHAVSEQDSVQRSP. The segment covering 523–539 has biased composition (basic and acidic residues); that stretch reads SGTDKNPDCSVDDHAVS.

Belongs to the krueppel C2H2-type zinc-finger protein family. As to expression, mainly expressed in the neuromuscular system. Located in and around synaptic myonuclei in adult muscle. Expression is dysregulated after nerve injury. Also found in the cerebellum, testis, heart, brain and liver.

It localises to the nucleus. The chain is Myoneurin (Mynn) from Mus musculus (Mouse).